The primary structure comprises 247 residues: ATP synthase subunit a, chloroplastic (247 aa).

5 helical membrane passes run Gln-38–Val-58, Val-95–Leu-115, Ile-134–Ser-154, Leu-199–Leu-219, and Gly-220–Gly-240.

Belongs to the ATPase A chain family. In terms of assembly, F-type ATPases have 2 components, CF(1) - the catalytic core - and CF(0) - the membrane proton channel. CF(1) has five subunits: alpha(3), beta(3), gamma(1), delta(1), epsilon(1). CF(0) has four main subunits: a, b, b' and c.

The protein resides in the plastid. It localises to the chloroplast thylakoid membrane. Key component of the proton channel; it plays a direct role in the translocation of protons across the membrane. The polypeptide is ATP synthase subunit a, chloroplastic (Hordeum vulgare (Barley)).